The following is a 337-amino-acid chain: Putative 2-aminoethylphosphonate-binding periplasmic protein (337 aa).

The first 21 residues, 1–21, serve as a signal peptide directing secretion; that stretch reads MKLSRLALLSVFALASAPSWA.

Belongs to the bacterial solute-binding protein 1 family.

Its subcellular location is the periplasm. Functionally, probably part of the PhnSTUV complex (TC 3.A.1.11.5) involved in 2-aminoethylphosphonate import. The protein is Putative 2-aminoethylphosphonate-binding periplasmic protein (phnS) of Salmonella paratyphi A (strain ATCC 9150 / SARB42).